A 200-amino-acid chain; its full sequence is NAD(P)H dehydrogenase (quinone) (200 aa).

One can recognise a Flavodoxin-like domain in the interval 4–191; that stretch reads VLVLYYSSYG…DIARYQGKRV (188 aa). FMN contacts are provided by residues 10–15 and 79–81; these read SSYGHV and TRF. NAD(+) is bound at residue Tyr-12. Trp-99 is a substrate binding site. Residues 114–120 and His-135 contribute to the FMN site; that span reads STGTQHG.

Belongs to the WrbA family. It depends on FMN as a cofactor.

The enzyme catalyses a quinone + NADH + H(+) = a quinol + NAD(+). It carries out the reaction a quinone + NADPH + H(+) = a quinol + NADP(+). The protein is NAD(P)H dehydrogenase (quinone) of Burkholderia lata (strain ATCC 17760 / DSM 23089 / LMG 22485 / NCIMB 9086 / R18194 / 383).